A 268-amino-acid chain; its full sequence is NAC domain-containing protein 41 (268 aa).

One can recognise an NAC domain in the interval 15–160; it reads LPPGFRFHPT…NWVLCRVFLK (146 aa). Residues 109–166 mediate DNA binding; sequence VGMKKTLVFYKGKPPNGTRTNWVLHEYRLVDSQQDSLYGQNMNWVLCRVFLKKRSNSN. Residues 166–190 are disordered; sequence NSKRKEDEKEEVENEKETETERERE. Residues 180–190 show a composition bias toward basic and acidic residues; that stretch reads EKETETERERE.

The protein localises to the nucleus. Transcription activator of the mannan synthase CSLA9. Recognizes and binds to DNA-specific sequence of CSLA9 promoter. The sequence is that of NAC domain-containing protein 41 from Arabidopsis thaliana (Mouse-ear cress).